Here is a 215-residue protein sequence, read N- to C-terminus: Cytochrome b6 (215 aa).

A helical transmembrane segment spans residues 32–52; sequence IFYCLGGITLTCFLVQVATGF. Cys35 serves as a coordination point for heme c. Heme b contacts are provided by His86 and His100. The next 3 membrane-spanning stretches (helical) occupy residues 90 to 110, 116 to 136, and 186 to 206; these read ASMMVLMTILHVFRVYLTGGF, LTWVTGVVLAVLTASFGVTGY, and LHTFVLPLLTAVFMLMHFLMI. Heme b contacts are provided by His187 and His202.

Belongs to the cytochrome b family. PetB subfamily. As to quaternary structure, the 4 large subunits of the cytochrome b6-f complex are cytochrome b6, subunit IV (17 kDa polypeptide, PetD), cytochrome f and the Rieske protein, while the 4 small subunits are PetG, PetL, PetM and PetN. The complex functions as a dimer. Heme b is required as a cofactor. The cofactor is heme c.

Its subcellular location is the plastid. The protein localises to the chloroplast thylakoid membrane. Component of the cytochrome b6-f complex, which mediates electron transfer between photosystem II (PSII) and photosystem I (PSI), cyclic electron flow around PSI, and state transitions. This is Cytochrome b6 from Citrus sinensis (Sweet orange).